The following is a 369-amino-acid chain: Choline kinase B2 (369 aa).

It belongs to the choline/ethanolamine kinase family. The cofactor is Mg(2+).

The enzyme catalyses choline + ATP = phosphocholine + ADP + H(+). It functions in the pathway phospholipid metabolism; phosphatidylcholine biosynthesis; phosphocholine from choline: step 1/1. In terms of biological role, catalyzes the first step in phosphatidylcholine biosynthesis. Phosphorylates choline. The chain is Choline kinase B2 (ckb-2) from Caenorhabditis elegans.